The sequence spans 690 residues: Kelch-like protein 8 (690 aa).

Positions 111-178 constitute a BTB domain; it reads CDVELLVAGS…IYTDKIAITM (68 aa). The region spanning 213–314 is the BACK domain; the sequence is CMSLYHFSDI…VGWNFLCEAV (102 aa). Kelch repeat units follow at residues 383–430, 431–477, 478–524, 525–571, 572–618, and 620–665; these read AIFC…SANG, NLYA…SIEN, VIYA…VIGR, YLFA…VLDG, YLYA…ALGG, and VYAI…WANV.

As to quaternary structure, component of the BCR(kel-8) E3 ubiquitin ligase complex, at least composed of cul-3, kel-8 and rbx-1. Interacts with rpy-1. Expressed in neurons.

The protein resides in the synapse. Its pathway is protein modification; protein ubiquitination. Substrate-specific adapter of a BCR (BTB-CUL3-RBX1) E3 ubiquitin ligase complex that regulates degradation of glutamate receptors in neurons. The BCR(kel-8) ubiquitin ligase complex mediates ubiquitination and subsequent degradation of rpy-1. Indirectly regulates the protein turnover of glr-1, possibly via ubiquitination and degradation of rpy-1. The chain is Kelch-like protein 8 (kel-8) from Caenorhabditis elegans.